Here is a 500-residue protein sequence, read N- to C-terminus: uncharacterized protein (500 aa).

The chain crosses the membrane as a helical span at residues 27 to 47 (IFALILIVFGFIIAPLLPGIF).

The protein localises to the membrane. This is an uncharacterized protein from Borreliella burgdorferi (strain ATCC 35210 / DSM 4680 / CIP 102532 / B31) (Borrelia burgdorferi).